The primary structure comprises 582 residues: Threonine--tRNA ligase (582 aa).

Residues 185–478 (DHRKLGKELE…LTEQYGGAFP (294 aa)) are catalytic. 3 residues coordinate Zn(2+): cysteine 278, histidine 329, and histidine 455.

It belongs to the class-II aminoacyl-tRNA synthetase family. In terms of assembly, homodimer. The cofactor is Zn(2+).

It is found in the cytoplasm. It catalyses the reaction tRNA(Thr) + L-threonine + ATP = L-threonyl-tRNA(Thr) + AMP + diphosphate + H(+). In terms of biological role, catalyzes the attachment of threonine to tRNA(Thr) in a two-step reaction: L-threonine is first activated by ATP to form Thr-AMP and then transferred to the acceptor end of tRNA(Thr). Also edits incorrectly charged L-seryl-tRNA(Thr). This is Threonine--tRNA ligase from Dehalococcoides mccartyi (strain ATCC BAA-2100 / JCM 16839 / KCTC 5957 / BAV1).